Consider the following 851-residue polypeptide: DNA mismatch repair protein MutS (851 aa).

602–609 (GPNMSGKS) provides a ligand contact to ATP.

Belongs to the DNA mismatch repair MutS family.

This protein is involved in the repair of mismatches in DNA. It is possible that it carries out the mismatch recognition step. This protein has a weak ATPase activity. This is DNA mismatch repair protein MutS from Streptococcus pyogenes serotype M4 (strain MGAS10750).